The following is a 172-amino-acid chain: MNNLIAIGYVLGTFGIEGWVKVEPLTDHPQRFLNTERVFWEKEDEIFPLRIEEVQLQAERILVKFMEINDIKEANKLIFGYLKIPKNEIVQLKENEFYLFQLKGLTVYDLNYQKIGVVRTVLKNPANDLLVIDTIHDKELLLPFIKVFVKEVNLPEGFIKVELLPGMLEEKK.

In terms of domain architecture, PRC barrel spans 94-167 (ENEFYLFQLK…FIKVELLPGM (74 aa)).

Belongs to the RimM family. Binds ribosomal protein uS19.

It localises to the cytoplasm. Its function is as follows. An accessory protein needed during the final step in the assembly of 30S ribosomal subunit, possibly for assembly of the head region. Essential for efficient processing of 16S rRNA. May be needed both before and after RbfA during the maturation of 16S rRNA. It has affinity for free ribosomal 30S subunits but not for 70S ribosomes. In Carboxydothermus hydrogenoformans (strain ATCC BAA-161 / DSM 6008 / Z-2901), this protein is Ribosome maturation factor RimM.